Reading from the N-terminus, the 209-residue chain is Histidine biosynthesis bifunctional protein HisIE (209 aa).

Residues 1-116 (MKQADELRFN…EEQAADRFGI (116 aa)) form a phosphoribosyl-AMP cyclohydrolase region. The phosphoribosyl-ATP pyrophosphohydrolase stretch occupies residues 117–209 (MNELERVIAE…LKKRHSEIEE (93 aa)).

The protein in the N-terminal section; belongs to the PRA-CH family. This sequence in the C-terminal section; belongs to the PRA-PH family.

The protein localises to the cytoplasm. The catalysed reaction is 1-(5-phospho-beta-D-ribosyl)-ATP + H2O = 1-(5-phospho-beta-D-ribosyl)-5'-AMP + diphosphate + H(+). It carries out the reaction 1-(5-phospho-beta-D-ribosyl)-5'-AMP + H2O = 1-(5-phospho-beta-D-ribosyl)-5-[(5-phospho-beta-D-ribosylamino)methylideneamino]imidazole-4-carboxamide. The protein operates within amino-acid biosynthesis; L-histidine biosynthesis; L-histidine from 5-phospho-alpha-D-ribose 1-diphosphate: step 2/9. It participates in amino-acid biosynthesis; L-histidine biosynthesis; L-histidine from 5-phospho-alpha-D-ribose 1-diphosphate: step 3/9. The chain is Histidine biosynthesis bifunctional protein HisIE (hisI) from Bacillus subtilis (strain 168).